The following is a 425-amino-acid chain: Enolase (425 aa).

Q163 is a (2R)-2-phosphoglycerate binding site. The active-site Proton donor is E205. Mg(2+) contacts are provided by D242, E285, and D312. (2R)-2-phosphoglycerate contacts are provided by K337, R366, S367, and K388. Catalysis depends on K337, which acts as the Proton acceptor.

Belongs to the enolase family. It depends on Mg(2+) as a cofactor.

The protein localises to the cytoplasm. It is found in the secreted. The protein resides in the cell surface. It carries out the reaction (2R)-2-phosphoglycerate = phosphoenolpyruvate + H2O. The protein operates within carbohydrate degradation; glycolysis; pyruvate from D-glyceraldehyde 3-phosphate: step 4/5. Catalyzes the reversible conversion of 2-phosphoglycerate (2-PG) into phosphoenolpyruvate (PEP). It is essential for the degradation of carbohydrates via glycolysis. The protein is Enolase of Rhodospirillum rubrum (strain ATCC 11170 / ATH 1.1.1 / DSM 467 / LMG 4362 / NCIMB 8255 / S1).